Reading from the N-terminus, the 96-residue chain is NADH-ubiquinone oxidoreductase chain 6 (96 aa).

The next 2 membrane-spanning stretches (helical) occupy residues 24 to 44 (MSLL…LGSI) and 48 to 68 (WFAY…FIYV).

It belongs to the complex I subunit 6 family.

The protein localises to the mitochondrion membrane. It carries out the reaction a ubiquinone + NADH + 5 H(+)(in) = a ubiquinol + NAD(+) + 4 H(+)(out). In terms of biological role, core subunit of the mitochondrial membrane respiratory chain NADH dehydrogenase (Complex I) that is believed to belong to the minimal assembly required for catalysis. Complex I functions in the transfer of electrons from NADH to the respiratory chain. The immediate electron acceptor for the enzyme is believed to be ubiquinone. This is NADH-ubiquinone oxidoreductase chain 6 (ND6) from Albinaria turrita (Door snail).